The chain runs to 946 residues: Isoleucine--tRNA ligase (946 aa).

A 'HIGH' region motif is present at residues 58–68 (PYANGSIHIGH). Position 568 (Glu-568) interacts with L-isoleucyl-5'-AMP. The short motif at 609–613 (KMSKS) is the 'KMSKS' region element. Position 612 (Lys-612) interacts with ATP. Zn(2+) is bound by residues Cys-908, Cys-911, Cys-928, and Cys-931.

Belongs to the class-I aminoacyl-tRNA synthetase family. IleS type 1 subfamily. As to quaternary structure, monomer. Zn(2+) is required as a cofactor.

Its subcellular location is the cytoplasm. The catalysed reaction is tRNA(Ile) + L-isoleucine + ATP = L-isoleucyl-tRNA(Ile) + AMP + diphosphate. In terms of biological role, catalyzes the attachment of isoleucine to tRNA(Ile). As IleRS can inadvertently accommodate and process structurally similar amino acids such as valine, to avoid such errors it has two additional distinct tRNA(Ile)-dependent editing activities. One activity is designated as 'pretransfer' editing and involves the hydrolysis of activated Val-AMP. The other activity is designated 'posttransfer' editing and involves deacylation of mischarged Val-tRNA(Ile). The chain is Isoleucine--tRNA ligase from Chromohalobacter salexigens (strain ATCC BAA-138 / DSM 3043 / CIP 106854 / NCIMB 13768 / 1H11).